Consider the following 155-residue polypeptide: SsrA-binding protein (155 aa).

The protein belongs to the SmpB family.

It is found in the cytoplasm. Required for rescue of stalled ribosomes mediated by trans-translation. Binds to transfer-messenger RNA (tmRNA), required for stable association of tmRNA with ribosomes. tmRNA and SmpB together mimic tRNA shape, replacing the anticodon stem-loop with SmpB. tmRNA is encoded by the ssrA gene; the 2 termini fold to resemble tRNA(Ala) and it encodes a 'tag peptide', a short internal open reading frame. During trans-translation Ala-aminoacylated tmRNA acts like a tRNA, entering the A-site of stalled ribosomes, displacing the stalled mRNA. The ribosome then switches to translate the ORF on the tmRNA; the nascent peptide is terminated with the 'tag peptide' encoded by the tmRNA and targeted for degradation. The ribosome is freed to recommence translation, which seems to be the essential function of trans-translation. The polypeptide is SsrA-binding protein (Moorella thermoacetica (strain ATCC 39073 / JCM 9320)).